The primary structure comprises 580 residues: Adenine deaminase 2 (580 aa).

This sequence belongs to the metallo-dependent hydrolases superfamily. Adenine deaminase family. Mn(2+) serves as cofactor.

The catalysed reaction is adenine + H2O + H(+) = hypoxanthine + NH4(+). The sequence is that of Adenine deaminase 2 from Latilactobacillus sakei subsp. sakei (strain 23K) (Lactobacillus sakei subsp. sakei).